Reading from the N-terminus, the 256-residue chain is Large ribosomal subunit protein uL2 (256 aa).

The interval 208–230 (EHPHGGGNHQHIGKASTVKRGTS) is disordered.

Belongs to the universal ribosomal protein uL2 family. As to expression, in larvae tissues examined: gut, brain imaginal disk, salivary glands, fat body, muscles, epidermis and trachaea.

Its subcellular location is the cytoplasm. The protein is Large ribosomal subunit protein uL2 (RpL8) of Drosophila melanogaster (Fruit fly).